Here is a 336-residue protein sequence, read N- to C-terminus: 25S rRNA (uridine(2634)-N(3))-methyltransferase (336 aa).

The tract at residues 286 to 307 (PGYHHRRTNSEQDTTKPAKERD) is disordered. Residues 293–307 (TNSEQDTTKPAKERD) show a composition bias toward basic and acidic residues.

Belongs to the class I-like SAM-binding methyltransferase superfamily. BMT5 family.

It is found in the nucleus. The protein localises to the nucleolus. It carries out the reaction uridine(2634) in 25S rRNA + S-adenosyl-L-methionine = N(3)-methyluridine(2634) in 25S rRNA + S-adenosyl-L-homocysteine + H(+). Its function is as follows. S-adenosyl-L-methionine-dependent methyltransferase that specifically methylates the N(3) position of uridine 2634 (m3U2634) in 25S rRNA. The sequence is that of 25S rRNA (uridine(2634)-N(3))-methyltransferase (BMT5) from Saccharomyces cerevisiae (strain ATCC 204508 / S288c) (Baker's yeast).